The chain runs to 1358 residues: DNA-directed RNA polymerase subunit beta (1358 aa).

This sequence belongs to the RNA polymerase beta chain family. As to quaternary structure, the RNAP catalytic core consists of 2 alpha, 1 beta, 1 beta' and 1 omega subunit. When a sigma factor is associated with the core the holoenzyme is formed, which can initiate transcription.

The catalysed reaction is RNA(n) + a ribonucleoside 5'-triphosphate = RNA(n+1) + diphosphate. Its function is as follows. DNA-dependent RNA polymerase catalyzes the transcription of DNA into RNA using the four ribonucleoside triphosphates as substrates. The chain is DNA-directed RNA polymerase subunit beta from Neorickettsia sennetsu (strain ATCC VR-367 / Miyayama) (Ehrlichia sennetsu).